A 292-amino-acid polypeptide reads, in one-letter code: Coiled-coil domain-containing protein 192 (292 aa).

The segment at 28–55 (SVVPESDTSERSSMTSGSSESDIPQENK) is disordered. The segment covering 38 to 49 (RSSMTSGSSESD) has biased composition (low complexity). Coiled coils occupy residues 65–174 (QMAF…LATA) and 222–258 (IMELSTQVSLQTERITQLKEVLEEKERKIQQLEAERS). Residues 251-267 (QQLEAERSPHPPQEVKD) show a composition bias toward basic and acidic residues. A disordered region spans residues 251–292 (QQLEAERSPHPPQEVKDPPGCLPEAPVFSTHDIPPVVSDENL).

This Homo sapiens (Human) protein is Coiled-coil domain-containing protein 192.